A 418-amino-acid polypeptide reads, in one-letter code: Homoaconitase large subunit (418 aa).

Positions 292, 352, and 355 each coordinate [4Fe-4S] cluster.

This sequence belongs to the aconitase/IPM isomerase family. In terms of assembly, heterodimer of HacA and HacB. The cofactor is [4Fe-4S] cluster.

It catalyses the reaction (2R,3S)-homoisocitrate = cis-homoaconitate + H2O. It functions in the pathway amino-acid biosynthesis; L-lysine biosynthesis via AAA pathway; L-alpha-aminoadipate from 2-oxoglutarate: step 3/5. Its activity is regulated as follows. Is not inhibited by lysine. In terms of biological role, catalyzes the reversible hydration of cis-homoaconitate ((Z)-but-1-ene-1,2,4-tricarboxylate) to homoisocitrate ((1R,2S)-1-hydroxybutane-1,2,4-tricarboxylate). Can catalyze neither the dehydration of (R)-homocitrate ((2R)-2-hydroxybutane-1,2,4-tricarboxylate) into cis-homoaconitate in vitro, nor the reverse reaction. Is not active toward (S)-homocitrate, cis-aconitate or citrate as substrate. The protein is Homoaconitase large subunit (hacA) of Thermus thermophilus (strain ATCC BAA-163 / DSM 7039 / HB27).